The chain runs to 263 residues: Lens fiber major intrinsic protein (263 aa).

Topologically, residues 1–12 are cytoplasmic; the sequence is MWELRSASFWRA. A helical transmembrane segment spans residues 13–30; that stretch reads IFAEFFATLFYVFFGLGA. The Extracellular portion of the chain corresponds to 31–40; the sequence is SLRWAPGPLH. Residues 41–59 traverse the membrane as a helical segment; the sequence is VLQVALAFGLALATLVQAV. At 60–63 the chain is on the cytoplasmic side; that stretch reads GHIS. The discontinuously helical intramembrane region spans 64 to 76; the sequence is GAHVNPAVTFAFL. An NPA 1 motif is present at residues 68–70; that stretch reads NPA. Residues 77–85 are Cytoplasmic-facing; it reads VGSQMSLLR. Residues 86–106 form a helical membrane-spanning segment; that stretch reads AICYVVAQLLGAVAGAAVLYS. Residues 107 to 126 lie on the Extracellular side of the membrane; it reads VTPPAVRGNLALNTLHPGVS. Residues 127 to 147 traverse the membrane as a helical segment; it reads VGQATIVEIFLTLQFVLCIFA. At 148-157 the chain is on the cytoplasmic side; it reads TYDERRNGRL. The chain crosses the membrane as a helical span at residues 158–175; the sequence is GSVALAVGFSLTLGHLFG. At 176–177 the chain is on the extracellular side; that stretch reads MY. An intramembrane region (discontinuously helical) is located at residues 178 to 193; it reads YTGAGMNPARSFAPAI. The NPA 2 motif lies at 184–186; the sequence is NPA. Topologically, residues 194–200 are extracellular; sequence LTRNFTN. The helical transmembrane segment at 201–218 threads the bilayer; it reads HWVYWVGPVIGAGLGSLL. Residues 219–263 lie on the Cytoplasmic side of the membrane; it reads YDFLLFPRLKSVSERLSILKGTRPSESNGQPEVTGEPVELKTQAL. The interval 227–237 is interaction with CALM; sequence LKSVSERLSIL. Phosphoserine occurs at positions 235, 243, and 245. A disordered region spans residues 240–263; that stretch reads TRPSESNGQPEVTGEPVELKTQAL.

This sequence belongs to the MIP/aquaporin (TC 1.A.8) family. Homotetramer; each monomer provides an independent water pore. Two homotetramers on opposing membranes can dimerize, forming a cell-cell junction. Interacts with CALM; the calcium-calmodulin/CALM complex interacts with the cytoplasmic domains of two aquaporins, leading to channel closure. Interacts with BFSP1 (via C-terminus); prevents calcium-dependent inhibition of the water channel activity. Subject to partial proteolytic cleavage in the eye lens core. Partial proteolysis promotes interactions between tetramers from adjoining membranes. Post-translationally, fatty acylated at Met-1 and Lys-238. The acyl modifications, in decreasing order of ion abundance, are: oleoyl (C18:1) &gt; palmitoyl (C16:0) &gt; stearoyl (C18:0) &gt; eicosenoyl (C20:1) &gt; dihomo-gamma-linolenoyl (C20:3) &gt; palmitoleoyl (C16:1) &gt; eicosadienoyl (C20:2). In terms of tissue distribution, detected in eye lens (at protein level).

Its subcellular location is the cell membrane. It localises to the cell junction. It carries out the reaction H2O(in) = H2O(out). The water channel activity is inhibited by calcium through calmodulin/CALM. Functionally, aquaporins form homotetrameric transmembrane channels, with each monomer independently mediating water transport across the plasma membrane along its osmotic gradient. Specifically expressed in lens fiber cells, this aquaporin is crucial for maintaining lens water homeostasis and transparency. Beyond water permeability, it also acts as a cell-to-cell adhesion molecule, forming thin junctions between lens fiber cells that are essential for maintaining the ordered structure and transparency of the lens. This chain is Lens fiber major intrinsic protein, found in Ovis aries (Sheep).